The following is a 90-amino-acid chain: Carboxysome shell vertex protein CsoS4A (90 aa).

Positions 1 to 78 (MKIYKVDKTL…SDLTIVGIID (78 aa)) constitute a BMV domain.

This sequence belongs to the CcmL/EutN family. CsoS4 subfamily. Homopentamer.

It localises to the carboxysome. Its function is as follows. Probably forms vertices in the carboxysome, a polyhedral inclusion where RuBisCO (ribulose bisphosphate carboxylase, cbbL-cbbS) is sequestered. Has been modeled to induce curvature upon insertion into an otherwise flat hexagonal layer of major carboxysome subunits. This chain is Carboxysome shell vertex protein CsoS4A, found in Hydrogenovibrio crunogenus (strain DSM 25203 / XCL-2) (Thiomicrospira crunogena).